The chain runs to 239 residues: 1-(5-phosphoribosyl)-5-[(5-phosphoribosylamino)methylideneamino] imidazole-4-carboxamide isomerase (239 aa).

Asp-8 acts as the Proton acceptor in catalysis. Catalysis depends on Asp-129, which acts as the Proton donor.

The protein belongs to the HisA/HisF family.

The protein resides in the cytoplasm. It catalyses the reaction 1-(5-phospho-beta-D-ribosyl)-5-[(5-phospho-beta-D-ribosylamino)methylideneamino]imidazole-4-carboxamide = 5-[(5-phospho-1-deoxy-D-ribulos-1-ylimino)methylamino]-1-(5-phospho-beta-D-ribosyl)imidazole-4-carboxamide. Its pathway is amino-acid biosynthesis; L-histidine biosynthesis; L-histidine from 5-phospho-alpha-D-ribose 1-diphosphate: step 4/9. The polypeptide is 1-(5-phosphoribosyl)-5-[(5-phosphoribosylamino)methylideneamino] imidazole-4-carboxamide isomerase (Bacillus cereus (strain ZK / E33L)).